The sequence spans 520 residues: GMP synthase [glutamine-hydrolyzing] (520 aa).

One can recognise a Glutamine amidotransferase type-1 domain in the interval 12–205 (KIIVLDYGSQ…AISICGARGD (194 aa)). Cysteine 89 serves as the catalytic Nucleophile. Catalysis depends on residues histidine 179 and glutamate 181. In terms of domain architecture, GMPS ATP-PPase spans 206 to 395 (WSMDNFIDME…LGMPEEIVWR (190 aa)). An ATP-binding site is contributed by 233 to 239 (SGGVDSS).

As to quaternary structure, homodimer.

It catalyses the reaction XMP + L-glutamine + ATP + H2O = GMP + L-glutamate + AMP + diphosphate + 2 H(+). It functions in the pathway purine metabolism; GMP biosynthesis; GMP from XMP (L-Gln route): step 1/1. Functionally, catalyzes the synthesis of GMP from XMP. The polypeptide is GMP synthase [glutamine-hydrolyzing] (Streptococcus pyogenes serotype M5 (strain Manfredo)).